A 352-amino-acid chain; its full sequence is C-C chemokine receptor type 5 (352 aa).

Over Met1–Ala30 the chain is Extracellular. At Tyr3 the chain carries Sulfotyrosine. Ser6 and Ser7 each carry an O-linked (GalNAc...) serine glycan. Tyr10, Tyr14, and Tyr15 each carry sulfotyrosine. 2 disulfide bridges follow: Cys20-Cys269 and Cys101-Cys178. A helical transmembrane segment spans residues Arg31–Cys58. At Lys59–Tyr68 the chain is on the cytoplasmic side. Residues Leu69–Tyr89 form a helical membrane-spanning segment. At Ala90–Gln102 the chain is on the extracellular side. Residues Leu103–Ile124 form a helical membrane-spanning segment. The Cytoplasmic segment spans residues Asp125–Thr141. Residues Val142–Phe166 form a helical membrane-spanning segment. Over Thr167–Ile198 the chain is Extracellular. A helical membrane pass occupies residues Val199–Leu218. Residues Lys219 to Arg235 lie on the Cytoplasmic side of the membrane. Residues Leu236–Phe260 traverse the membrane as a helical segment. Topologically, residues Gln261–Gln277 are extracellular. A helical membrane pass occupies residues Ala278–Gly301. Residues Glu302–Leu352 lie on the Cytoplasmic side of the membrane. S-palmitoyl cysteine attachment occurs at residues Cys321, Cys323, and Cys324. Residues Ser336, Ser337, Ser342, and Ser349 each carry the phosphoserine; by BARK1 modification.

It belongs to the G-protein coupled receptor 1 family. In terms of assembly, interacts with PRAF2. Efficient ligand binding to CCL3/MIP-1alpha and CCL4/MIP-1beta requires sulfation, O-glycosylation and sialic acid modifications. Glycosylation on Ser-6 is required for efficient binding of CCL4. Interacts with GRK2. Interacts with ARRB1 and ARRB2. Interacts with CNIH4. Interacts with S100A4; this interaction stimulates T-lymphocyte chemotaxis. In terms of processing, sulfated on at least 2 of the N-terminal tyrosines. Sulfation is required for efficient binding of the chemokines, CCL3 and CCL4. Post-translationally, palmitoylation in the C-terminal is important for cell surface expression. Phosphorylation on serine residues in the C-terminal is stimulated by binding CC chemokines especially by APO-RANTES. In terms of processing, O-glycosylated, but not N-glycosylated. Ser-6 appears to be the major site even if Ser-7 may be also O-glycosylated. Also sialylated glycans present which contribute to chemokine binding. Thr-16 and Ser-17 may also be glycosylated and, if so, with small moieties such as a T-antigen.

The protein resides in the cell membrane. Receptor for a number of inflammatory CC-chemokines including CCL3/MIP-1-alpha, CCL4/MIP-1-beta and RANTES and subsequently transduces a signal by increasing the intracellular calcium ion level. May play a role in the control of granulocytic lineage proliferation or differentiation. Participates in T-lymphocyte migration to the infection site by acting as a chemotactic receptor. The protein is C-C chemokine receptor type 5 (CCR5) of Pan paniscus (Pygmy chimpanzee).